The primary structure comprises 142 residues: MAP3K7 C-terminal-like protein (142 aa).

As to expression, detected in lung and peripheral blood leukocytes. Expressed predominantly in peripheral blood leukocytes and ubiquitously in adult and fetal tissues. Also expressed strongly in breast carcinoma GI-101, colon adenocarcinoma GI-112, and prostatic adenocarcinoma PC3.

The protein is MAP3K7 C-terminal-like protein (MAP3K7CL) of Homo sapiens (Human).